Here is a 160-residue protein sequence, read N- to C-terminus: Ribosomal RNA large subunit methyltransferase H (160 aa).

The S-adenosyl-L-methionine site is built by Leu76 and Gly108.

It belongs to the RNA methyltransferase RlmH family. Homodimer.

It is found in the cytoplasm. It carries out the reaction pseudouridine(1915) in 23S rRNA + S-adenosyl-L-methionine = N(3)-methylpseudouridine(1915) in 23S rRNA + S-adenosyl-L-homocysteine + H(+). Specifically methylates the pseudouridine at position 1915 (m3Psi1915) in 23S rRNA. This is Ribosomal RNA large subunit methyltransferase H from Rhodopseudomonas palustris (strain BisB5).